Here is a 1340-residue protein sequence, read N- to C-terminus: WASH complex subunit 2 (1340 aa).

The segment at 1–219 (MNRTTPDQEL…VGSDRGSIVD (219 aa)) is sufficient for interaction with WASHC3, WASHC4 and WASHC5; required for interaction with WASHC1. Phosphoserine is present on residues Ser157, Ser159, Ser204, Ser205, and Ser209. The span at 201–213 (GELSSEEGSVGSD) shows a compositional bias: low complexity. The interval 201–404 (GELSSEEGSV…SSSKPGKKIP (204 aa)) is disordered. The segment covering 219-231 (DTEEEKEEEESDE) has biased composition (acidic residues). The segment covering 232–241 (DFAHHSDNDQ) has biased composition (basic and acidic residues). Composition is skewed to acidic residues over residues 249-258 (SDEEEDDDGC) and 265-275 (EKEEEDIEDIE). At Ser287 the chain carries Phosphoserine. A compositionally biased stretch (basic and acidic residues) spans 292–306 (LAARIKGDAVGRVDE). A Phosphothreonine modification is found at Thr330. Residues 354–365 (GSGGGLFSGGKG) show a composition bias toward gly residues. The sufficient for interaction with CCDC93 stretch occupies residues 355-599 (SGGGLFSGGK…QTLSLQAQGE (245 aa)). An interaction with VPS35 region spans residues 356–1340 (GGGLFSGGKG…DDPLNAFGGQ (985 aa)). The LFa 1 signature appears at 366–377 (LFDDEDEESDLF). Ser394 and Ser396 each carry phosphoserine. Short sequence motifs (LFa) lie at residues 410 to 418 (VFLGDTDVF), 449 to 462 (LFDD…DDFF), and 481 to 490 (IFGDDEGDLF). Disordered stretches follow at residues 421–586 (ASVP…GGTA), 618–663 (SSDE…KASL), and 695–838 (DSGG…STGV). The segment covering 450-461 (FDDDDGDDDDDF) has biased composition (acidic residues). Basic and acidic residues predominate over residues 506–516 (DENKARAEKKV). The span at 517–527 (SLPSSKNLKPS) shows a compositional bias: low complexity. 3 short sequence motifs (LFa) span residues 536-547 (LFSDEEDSEDLF), 571-582 (LFEDEDEEDNLF), and 616-628 (LFSS…WNIP). 2 positions are modified to phosphoserine: Ser538 and Ser543. Residues 546 to 566 (LFSSQSASKLKGAPLLPGKLP) are compositionally biased toward low complexity. Phosphoserine is present on residues Ser618 and Ser619. Residues 636 to 646 (SDSRSKGESRD) are compositionally biased toward basic and acidic residues. 3 consecutive short sequence motifs (LFa) follow at residues 663–673 (LFEEDEEDDLF), 689–701 (LFED…GSLF), and 725–737 (LFSD…AQLG). A phosphoserine mark is found at Ser727, Ser751, Ser786, and Ser801. A compositionally biased stretch (basic and acidic residues) spans 740–767 (PVDKKVESAKESLKFGRTDVAESEKEGL). An LFa 11 motif is present at residues 802 to 816 (LFDEEEDKMEDQNTI). Residues 822 to 833 (EVGKGRDPDARP) are compositionally biased toward basic and acidic residues. Short sequence motifs (LFa) lie at residues 838-846 (VFQDEELLF) and 855-861 (DPDVDLF). Phosphoserine occurs at positions 873 and 876. The short motif at 877–887 (LFGDDEDDDLF) is the LFa 14 element. Disordered stretches follow at residues 906–950 (DYSV…KEPS) and 987–1205 (FPSS…EDED). Residues 916–930 (KHPETIQGIKEKGIW) show a composition bias toward basic and acidic residues. The interaction with phospholipids stretch occupies residues 936–1340 (QDSSGLAPFK…DDPLNAFGGQ (405 aa)). Basic residues predominate over residues 1027 to 1045 (NKSRVKMRGKRRPQTRAAR). Positions 1028-1046 (KSRVKMRGKRRPQTRAARR) are required for interaction with F-actin-capping protein subunit alpha (CAPZA1 or CAPZA2 or CAPZA3). A phosphoserine mark is found at Ser1053 and Ser1086. Positions 1093-1109 (EALAAAAAPWEGGPVPG) are enriched in low complexity. Ser1113 carries the phosphoserine modification. Short sequence motifs (LFa) lie at residues 1128-1135 (LFDSGDIF), 1170-1184 (MFPA…DDLF), 1200-1208 (LLEDEDDLF), 1233-1239 (IFEDDIF), 1261-1269 (LFDDNIDIF), and 1289-1298 (IFDDDMDDIF). Phosphoserine occurs at positions 1178 and 1179. The interval 1301–1325 (GIQAKTAKPKSRSAQAAPEPRFEHK) is disordered. An LFa 21 motif is present at residues 1329–1337 (IFDDPLNAF).

It belongs to the FAM21 family. Component of the WASH core complex also described as WASH regulatory complex (SHRC) composed of WASHC1, WASHC2, WASHC3, WASHC4 and WASHC5; in the complex interacts (via N-terminus) directly with WASHC1. The WASH core complex associates with the F-actin-capping protein dimer (formed by CAPZA1, CAPZA2 or CAPZA3 and CAPZB) in a transient or substoichiometric manner which was initially described as WASH complex. Interacts with VPS35; mediates the association with the retromer CSC complex. Interacts with FKBP15. Interacts with CCDC93, CCDC22, VPS35L; indicative for an association of the WASH core complex with the CCC and retriever complexes. Directly interacts with TBC1D23.

It is found in the early endosome membrane. Its subcellular location is the cell membrane. In terms of biological role, acts as a component of the WASH core complex that functions as a nucleation-promoting factor (NPF) at the surface of endosomes, where it recruits and activates the Arp2/3 complex to induce actin polymerization, playing a key role in the fission of tubules that serve as transport intermediates during endosome sorting. Mediates the recruitment of the WASH core complex to endosome membranes via binding to phospholipids and VPS35 of the retromer CSC. Mediates the recruitment of the F-actin-capping protein dimer to the WASH core complex probably promoting localized F-actin polymerization needed for vesicle scission. Via its C-terminus binds various phospholipids, most strongly phosphatidylinositol 4-phosphate (PtdIns-(4)P), phosphatidylinositol 5-phosphate (PtdIns-(5)P) and phosphatidylinositol 3,5-bisphosphate (PtdIns-(3,5)P2). Involved in the endosome-to-plasma membrane trafficking and recycling of SNX27-retromer-dependent cargo proteins, such as GLUT1. Required for the association of DNAJC13, ENTR1, ANKRD50 with retromer CSC subunit VPS35. Required for the endosomal recruitment of CCC and retriever complexes subunits COMMD1 and CCDC93 as well as the retrievere complex subunit VPS35L. The chain is WASH complex subunit 2 from Pongo abelii (Sumatran orangutan).